We begin with the raw amino-acid sequence, 213 residues long: MGNGTEEDYNFVFKVVLIGESGVGKTNLLSRFTRNEFSHDSRTTIGVEFSTRTVMLGTAAVKAQIWDTAGLERYRAITSAYYRGAVGALLVFDLTKHQTYAVVERWLKELYDHAEATIVVMLVGNKSDLSQAREVPTEEARMFAENNGLLFLETSALDSTNVELAFETVLKEIFAKVSKQRQNSIRTNAITLGSAQAGQEPGPGEKRACCISL.

GTP contacts are provided by Ser-21, Gly-24, Lys-25, Thr-26, Asn-27, Ser-38, His-39, Thr-43, and Thr-44. Thr-26 lines the Mg(2+) pocket. Short sequence motifs (switch) lie at residues 35-49 (NEFS…GVEF) and 67-84 (DTAG…YYRG). Residues Thr-44 and Asp-67 each coordinate Mg(2+). Residues Gly-70, Asn-125, Lys-126, Asp-128, Ala-156, and Leu-157 each contribute to the GTP site. S-geranylgeranyl cysteine attachment occurs at residues Cys-209 and Cys-210. A Cysteine methyl ester modification is found at Cys-210. A propeptide spans 211-213 (ISL) (removed in mature form).

It belongs to the small GTPase superfamily. Rab family. As to quaternary structure, interacts (GTP-bound form) with RAB11FIP1, RAB11FIP2, RAB11FIP3 and RAB11FIP4. Interacts (via the hypervariable C-terminal region) with ITGB1 (via the cytoplasmic region); the interaction is GTP-dependent. Interacts with ITGAV. Associates with the integrin alpha-V/beta-1 heterodimer. Interacts with VPS33B. Mg(2+) serves as cofactor. Expression is restricted to epithelial cells. Expressed in ovarian epithelium (NOE) and breast tissue. Expressed in ovarian cancer; expression is increased relative to NOE cells. Expression in ovarian cancer is stage dependent, with stage III and stage IV showing higher levels than early stage cancers. Expressed in breast cancer; expression is increased relative to normal breast tissue.

The protein resides in the cell membrane. It localises to the cytoplasmic vesicle. It is found in the cell projection. The protein localises to the pseudopodium membrane. It carries out the reaction GTP + H2O = GDP + phosphate + H(+). Its activity is regulated as follows. Regulated by guanine nucleotide exchange factors (GEFs) which promote the exchange of bound GDP for free GTP. Regulated by GTPase activating proteins (GAPs) which increase the GTP hydrolysis activity. Inhibited by GDP dissociation inhibitors (GDIs) which prevent Rab-GDP dissociation. In terms of biological role, the small GTPases Rab are key regulators of intracellular membrane trafficking, from the formation of transport vesicles to their fusion with membranes. Rabs cycle between an inactive GDP-bound form and an active GTP-bound form that is able to recruit to membranes different set of downstream effectors directly responsible for vesicle formation, movement, tethering and fusion. RAB25 regulates epithelial cell differentiation, proliferation and survival, thereby playing key roles in tumorigenesis. Promotes invasive migration of cells in which it functions to localize and maintain integrin alpha-V/beta-1 at the tips of extending pseudopodia. Involved in the regulation of epithelial morphogenesis through the control of CLDN4 expression and localization at tight junctions. May selectively regulate the apical recycling pathway. Together with MYO5B regulates transcytosis. The polypeptide is Ras-related protein Rab-25 (Homo sapiens (Human)).